Here is a 543-residue protein sequence, read N- to C-terminus: CTP synthase (543 aa).

Residues 1 to 265 (MARYIFITGG…DDEVLAAFAI (265 aa)) form an amidoligase domain region. Position 13 (Ser-13) interacts with CTP. Ser-13 contacts UTP. Residue 14–19 (SLGKGL) participates in ATP binding. Tyr-54 is a binding site for L-glutamine. Asp-71 lines the ATP pocket. Mg(2+)-binding residues include Asp-71 and Glu-139. Residues 146–148 (DIE), 186–191 (KTKPTQ), and Lys-222 each bind CTP. Residues 186–191 (KTKPTQ) and Lys-222 each bind UTP. 238-240 (RDA) lines the ATP pocket. One can recognise a Glutamine amidotransferase type-1 domain in the interval 291–542 (TIAIVGKYTG…VQAALVQSRL (252 aa)). Gly-353 lines the L-glutamine pocket. Cys-380 serves as the catalytic Nucleophile; for glutamine hydrolysis. L-glutamine-binding positions include 381 to 384 (FGMQ), Glu-404, and Arg-470. Catalysis depends on residues His-515 and Glu-517.

Belongs to the CTP synthase family. As to quaternary structure, homotetramer.

It carries out the reaction UTP + L-glutamine + ATP + H2O = CTP + L-glutamate + ADP + phosphate + 2 H(+). The enzyme catalyses L-glutamine + H2O = L-glutamate + NH4(+). The catalysed reaction is UTP + NH4(+) + ATP = CTP + ADP + phosphate + 2 H(+). It functions in the pathway pyrimidine metabolism; CTP biosynthesis via de novo pathway; CTP from UDP: step 2/2. Its activity is regulated as follows. Allosterically activated by GTP, when glutamine is the substrate; GTP has no effect on the reaction when ammonia is the substrate. The allosteric effector GTP functions by stabilizing the protein conformation that binds the tetrahedral intermediate(s) formed during glutamine hydrolysis. Inhibited by the product CTP, via allosteric rather than competitive inhibition. Functionally, catalyzes the ATP-dependent amination of UTP to CTP with either L-glutamine or ammonia as the source of nitrogen. Regulates intracellular CTP levels through interactions with the four ribonucleotide triphosphates. The protein is CTP synthase of Rhodopseudomonas palustris (strain ATCC BAA-98 / CGA009).